The chain runs to 504 residues: Sperm motility kinase 2A (504 aa).

The region spanning 28–276 (YEMLGTIGHG…VAEVMMHPWV (249 aa)) is the Protein kinase domain. ATP-binding positions include 34–42 (IGHGGSTKV) and Lys57. Residue Asp147 is the Proton acceptor of the active site. The UBA domain occupies 294-334 (KPDPAIVKAMGHIGFQAQDIEDSLRQRKFNETMASYCLLKK). Composition is skewed to polar residues over residues 376–393 (PTSL…CGRS) and 443–454 (SDESTEGHTSAS). 2 disordered regions span residues 376-403 (PTSL…RSFS) and 443-469 (SDES…PRGI).

This sequence belongs to the protein kinase superfamily. CAMK Ser/Thr protein kinase family. Smok subfamily. Testis-specific. Expressed in the testis from 22 days postpartum (22 dpp).

The enzyme catalyses L-seryl-[protein] + ATP = O-phospho-L-seryl-[protein] + ADP + H(+). It carries out the reaction L-threonyl-[protein] + ATP = O-phospho-L-threonyl-[protein] + ADP + H(+). May play a role in sperm motility, especially in the regulation of flagellar function. In Mus musculus (Mouse), this protein is Sperm motility kinase 2A (Smok2a).